A 249-amino-acid chain; its full sequence is Ditrans,polycis-undecaprenyl-diphosphate synthase ((2E,6E)-farnesyl-diphosphate specific) (249 aa).

Aspartate 29 is a catalytic residue. Aspartate 29 is a Mg(2+) binding site. Residues 30-33, tryptophan 34, arginine 42, histidine 46, and 74-76 contribute to the substrate site; these read GNGR and STE. Asparagine 77 serves as the catalytic Proton acceptor. Residues tryptophan 78, arginine 80, arginine 197, and 203–205 each bind substrate; that span reads RLS. Glutamate 216 lines the Mg(2+) pocket.

Belongs to the UPP synthase family. In terms of assembly, homodimer. It depends on Mg(2+) as a cofactor.

The catalysed reaction is 8 isopentenyl diphosphate + (2E,6E)-farnesyl diphosphate = di-trans,octa-cis-undecaprenyl diphosphate + 8 diphosphate. Functionally, generates ditrans,octacis-undecaprenyl pyrophosphate (UPP) from isopentenyl pyrophosphate (IPP) and farnesyl diphosphate. UPP is the precursor of glycosyl carrier lipid in the biosynthesis of bacterial cell wall polysaccharide components such as peptidoglycan and lipopolysaccharide. The protein is Ditrans,polycis-undecaprenyl-diphosphate synthase ((2E,6E)-farnesyl-diphosphate specific) (uppS) of Micrococcus luteus (Micrococcus lysodeikticus).